The sequence spans 27 residues: HSDGTLTSELSRLRDRARLQRLLQGLL.

Position 27 is a leucine amide (leucine 27).

Belongs to the glucagon family.

The protein resides in the secreted. Hormone involved in different processes, such as regulation of the pH of the duodenal content, food intake and water homeostasis. Exerts its biological effects by binding to secretin receptor (SCTR), a G-protein coupled receptor expressed in the basolateral domain of several cells. Acts as a key gastrointestinal hormone by regulating the pH of the duodenal content. Secreted by S cells of the duodenum in the crypts of Lieberkuehn and regulates the pH of the duodenum by (1) inhibiting the secretion of gastric acid from the parietal cells of the stomach and (2) stimulating the production of bicarbonate (NaHCO(3)) from the ductal cells of the pancreas. Production of bicarbonate is essential to neutralize the pH and ensure no damage is done to the small intestine by the gastric acid. In addition to regulating the pH of the duodenal content, plays a central role in diet induced thermogenesis: acts as a non-sympathetic brown fat (BAT) activator mediating prandial thermogenesis, which consequentially induces satiation. Mechanistically, secretin released by the gut after a meal binds to secretin receptor (SCTR) in brown adipocytes, activating brown fat thermogenesis by stimulating lipolysis, which is sensed in the brain and promotes satiation. Also able to stimulate lipolysis in white adipocytes. Also plays an important role in cellular osmoregulation: released into the systemic circulation in response to hyperosmolality and acts at different levels in the hypothalamus, pituitary and kidney to regulate water homeostasis. Also plays a role in the central nervous system, possibly by acting as a neuropeptide hormone: required for hippocampal synaptic function and neural progenitor cells maintenance. The protein is Secretin of Oryctolagus cuniculus (Rabbit).